The primary structure comprises 119 residues: cAMP-responsive element-binding protein-like 2 (119 aa).

The disordered stretch occupies residues 1–23 (MDDSKIVAGKVKKPGKRGRKPAK). Over residues 10 to 21 (KVKKPGKRGRKP) the composition is skewed to basic residues. In terms of domain architecture, bZIP spans 23–86 (KIDLKAKLER…LAMDQGKIPS (64 aa)). The basic motif stretch occupies residues 29–60 (KLERSRQSARECRARKKLRYQYLEELVSSKER). Residues 62 to 69 (ICALREEL) form a leucine-zipper region. Residues 95-119 (DEQKTPQSCSNKTTKNSKYSSSSGI) form a disordered region. The segment covering 102–119 (SCSNKTTKNSKYSSSSGI) has biased composition (low complexity).

It belongs to the bZIP family. ATF subfamily.

It localises to the nucleus. Probable regulator of creb1 transcriptional activity which is involved in adipose cells differentiation. May also play a regulatory role in the cell cycle. In Danio rerio (Zebrafish), this protein is cAMP-responsive element-binding protein-like 2 (crebl2).